Reading from the N-terminus, the 85-residue chain is UPF0386 protein VF_0869 (85 aa).

The protein belongs to the UPF0386 family.

The chain is UPF0386 protein VF_0869 from Aliivibrio fischeri (strain ATCC 700601 / ES114) (Vibrio fischeri).